Reading from the N-terminus, the 339-residue chain is Ketol-acid reductoisomerase (NADP(+)) (339 aa).

Residues 1–182 enclose the KARI N-terminal Rossmann domain; it reads MRVYYDRDAD…GGGRAGIIET (182 aa). NADP(+) contacts are provided by residues 24-27, R48, S51, S53, and 83-86; these read YGSQ and DELQ. H108 is a catalytic residue. G134 contributes to the NADP(+) binding site. One can recognise a KARI C-terminal knotted domain in the interval 183 to 328; it reads SFREETETDL…ARLRDMMPWI (146 aa). Mg(2+) is bound by residues D191, E195, E227, and E231. A substrate-binding site is contributed by S252.

Belongs to the ketol-acid reductoisomerase family. It depends on Mg(2+) as a cofactor.

The enzyme catalyses (2R)-2,3-dihydroxy-3-methylbutanoate + NADP(+) = (2S)-2-acetolactate + NADPH + H(+). The catalysed reaction is (2R,3R)-2,3-dihydroxy-3-methylpentanoate + NADP(+) = (S)-2-ethyl-2-hydroxy-3-oxobutanoate + NADPH + H(+). It participates in amino-acid biosynthesis; L-isoleucine biosynthesis; L-isoleucine from 2-oxobutanoate: step 2/4. Its pathway is amino-acid biosynthesis; L-valine biosynthesis; L-valine from pyruvate: step 2/4. Its function is as follows. Involved in the biosynthesis of branched-chain amino acids (BCAA). Catalyzes an alkyl-migration followed by a ketol-acid reduction of (S)-2-acetolactate (S2AL) to yield (R)-2,3-dihydroxy-isovalerate. In the isomerase reaction, S2AL is rearranged via a Mg-dependent methyl migration to produce 3-hydroxy-3-methyl-2-ketobutyrate (HMKB). In the reductase reaction, this 2-ketoacid undergoes a metal-dependent reduction by NADPH to yield (R)-2,3-dihydroxy-isovalerate. This chain is Ketol-acid reductoisomerase (NADP(+)), found in Afipia carboxidovorans (strain ATCC 49405 / DSM 1227 / KCTC 32145 / OM5) (Oligotropha carboxidovorans).